A 572-amino-acid chain; its full sequence is Transmembrane glycoprotein NMB (572 aa).

The N-terminal stretch at 1–22 (MESLCGVLVFLLLAAGLPLQAA) is a signal peptide. Topologically, residues 23–500 (KRFRDVLGHE…DLGSPLRTVN (478 aa)) are extracellular. Residues N93, N134, N200, N249, N275, N296, N300, N306, and N312 are each glycosylated (N-linked (GlcNAc...) asparagine). Positions 251-338 (SDETFLRDLP…SPSSSTSPSP (88 aa)) constitute a PKD domain. The tract at residues 321-359 (GPCPSPTPSPSSSTSPSPASSPSPTLSTPSPSLMPTGHK) is disordered. Over residues 330 to 356 (PSSSTSPSPASSPSPTLSTPSPSLMPT) the composition is skewed to low complexity. Residues N461 and N469 are each glycosylated (N-linked (GlcNAc...) asparagine). Residues 501–521 (GVLISIGCLAMFVTMVTILLY) form a helical membrane-spanning segment. Topologically, residues 522–572 (KKHKTYKPIGNCTRNVVKGKGLSVFLSHAKAPFSRGDREKDPLLQDKPWML) are cytoplasmic. Residue S544 is modified to Phosphoserine. The Cell attachment site motif lies at 556–558 (RGD).

It belongs to the PMEL/NMB family.

The protein localises to the cell membrane. It localises to the melanosome membrane. The protein resides in the early endosome membrane. Could be a melanogenic enzyme. The protein is Transmembrane glycoprotein NMB (Gpnmb) of Rattus norvegicus (Rat).